A 600-amino-acid polypeptide reads, in one-letter code: Cationic amino acid transporter 4, vacuolar (600 aa).

Residues 1-32 (MNSLVRRKQVDSVHLIKNDGPHQLAKKLSAVD) lie on the Cytoplasmic side of the membrane. The helical transmembrane segment at 33 to 53 (LVAIGVGTTIGAGVYILVGTV) threads the bilayer. Topologically, residues 54–60 (AREHTGP) are vacuolar. Residues 61-81 (ALAVSFFIAGVAAALSACCYA) traverse the membrane as a helical segment. Residues 82-92 (ELASRCPSAGS) lie on the Cytoplasmic side of the membrane. A helical membrane pass occupies residues 93–115 (AYHYAYICLGEGIAWLVGWALVL). The Vacuolar portion of the chain corresponds to 116 to 152 (DYTIGGSAIARGITPNLASFFGGLDNLPVFLARQTIP). Residues 153-173 (GVGIVVDPCAALLIMIVTILL) traverse the membrane as a helical segment. Residues 174–184 (CFGIKESSTVQ) lie on the Cytoplasmic side of the membrane. The helical transmembrane segment at 185–205 (AIVTSVNVCTLVFIIVVGGYL) threads the bilayer. Topologically, residues 206-220 (ACKTGWVGYDLPSGY) are vacuolar. Residues 221 to 241 (FPFGLNGILAGSAVVFFSYIG) traverse the membrane as a helical segment. Over 242–264 (FDTVTSTAEEVKNPQRDLPLGIG) the chain is Cytoplasmic. The chain crosses the membrane as a helical span at residues 265-285 (IALLICCILYMLLSVVIVGLV). Residues 286-308 (PYYSLNPDTPISSAFGDSGMQWA) are Vacuolar-facing. The helical transmembrane segment at 309 to 329 (AYILTTGAITALCASLLGSLL) threads the bilayer. At 330-360 (AQPRIFMAMARDGLLPAFFSEISPRTQVPVK) the chain is on the cytoplasmic side. A helical transmembrane segment spans residues 361–381 (STIAIGVLAAALAFFMDVAQL). Position 382 (S382) is a topological domain, vacuolar. The helical transmembrane segment at 383–403 (EMVSVGTLMAFTAVAVCVLVL) threads the bilayer. Residues 404–462 (RYVPPDGVPLSSSSQTLSDTDESRAETENFLVDAIESSDSPLLGNETARDEKYFGKRRK) lie on the Cytoplasmic side of the membrane. Residues 463 to 483 (IAAWSIALVCIGVLGLASAAS) traverse the membrane as a helical segment. Residues 484–492 (AERLPSFPR) lie on the Vacuolar side of the membrane. The helical transmembrane segment at 493-513 (FTICGVSAVILLGSLITLGYI) threads the bilayer. Residues 514–528 (DEDEERHNFGHKGGF) are Cytoplasmic-facing. A helical transmembrane segment spans residues 529–549 (LCPFVPYLPVLCILINTYLII). N550 is a topological domain (vacuolar). The chain crosses the membrane as a helical span at residues 551–571 (IGAGTWIRVLIWLLIGSMIYI). Over 572-600 (FYGRSHSLLNNAVYVPTMTCTRKTTDHLA) the chain is Cytoplasmic.

Belongs to the amino acid-polyamine-organocation (APC) superfamily. Cationic amino acid transporter (CAT) (TC 2.A.3.3) family. In terms of tissue distribution, expressed in roots, stems, flowers, and leaves.

It is found in the vacuole membrane. Its function is as follows. Permease involved in the transport of the cationic amino acids. In Arabidopsis thaliana (Mouse-ear cress), this protein is Cationic amino acid transporter 4, vacuolar (CAT4).